A 195-amino-acid polypeptide reads, in one-letter code: Imidazoleglycerol-phosphate dehydratase (195 aa).

Belongs to the imidazoleglycerol-phosphate dehydratase family.

The protein resides in the cytoplasm. The catalysed reaction is D-erythro-1-(imidazol-4-yl)glycerol 3-phosphate = 3-(imidazol-4-yl)-2-oxopropyl phosphate + H2O. Its pathway is amino-acid biosynthesis; L-histidine biosynthesis; L-histidine from 5-phospho-alpha-D-ribose 1-diphosphate: step 6/9. This is Imidazoleglycerol-phosphate dehydratase from Methylobacterium radiotolerans (strain ATCC 27329 / DSM 1819 / JCM 2831 / NBRC 15690 / NCIMB 10815 / 0-1).